Reading from the N-terminus, the 401-residue chain is Argininosuccinate synthase (401 aa).

8–16 (AYSGGLDTS) contacts ATP. L-citrulline is bound at residue Tyr85. Residue Gly115 participates in ATP binding. The L-aspartate site is built by Thr117, Asn121, and Asp122. Asn121 is an L-citrulline binding site. The L-citrulline site is built by Arg125, Ser173, Glu258, and Tyr270.

This sequence belongs to the argininosuccinate synthase family. Type 1 subfamily. Homotetramer.

Its subcellular location is the cytoplasm. It carries out the reaction L-citrulline + L-aspartate + ATP = 2-(N(omega)-L-arginino)succinate + AMP + diphosphate + H(+). It participates in amino-acid biosynthesis; L-arginine biosynthesis; L-arginine from L-ornithine and carbamoyl phosphate: step 2/3. In Staphylococcus carnosus (strain TM300), this protein is Argininosuccinate synthase.